The following is a 332-amino-acid chain: Fructose-1,6-bisphosphatase class 1 1 (332 aa).

4 residues coordinate Mg(2+): E92, D115, L117, and D118. Residues 118-121, N211, Y244, 262-264, and K274 each bind substrate; these read DGSS and YLY. E280 contributes to the Mg(2+) binding site.

This sequence belongs to the FBPase class 1 family. Homotetramer. It depends on Mg(2+) as a cofactor.

It localises to the cytoplasm. The enzyme catalyses beta-D-fructose 1,6-bisphosphate + H2O = beta-D-fructose 6-phosphate + phosphate. It participates in carbohydrate biosynthesis; gluconeogenesis. This chain is Fructose-1,6-bisphosphatase class 1 1, found in Christiangramia forsetii (strain DSM 17595 / CGMCC 1.15422 / KT0803) (Gramella forsetii).